Here is a 327-residue protein sequence, read N- to C-terminus: MQGSVTEFLKPRLVDIEQLSLTHAKVILEPLERGFGHTLGNALRRILLSSIPGYAVTEVEIDGILHEYSTKEGIREDIIEILLNLKELAVKVQSKDNVILTLNKSGLGPVTAANIIHDSDVQIIKPQHILCHLTEENASINMRIKVQRGRGYVPASARIHKYDRPIGRLLVDACYSPVENISYNVEAARVEQRTDLDKLILEIETNGTIDPEEAIRRAATILAEQLEAFVDLRDISQPEVKEEKPEFDPVLLRPVDDLELTVRSANCLKAEAIHYIGDLVQRTEVELLKTPNLGKKSLTEIKDVLASRGLSLGMRLENWPPLGFIDK.

Positions 1-233 (MQGSVTEFLK…EQLEAFVDLR (233 aa)) are alpha N-terminal domain (alpha-NTD). Residues 247-327 (FDPVLLRPVD…NWPPLGFIDK (81 aa)) form an alpha C-terminal domain (alpha-CTD) region.

The protein belongs to the RNA polymerase alpha chain family. In terms of assembly, homodimer. The RNAP catalytic core consists of 2 alpha, 1 beta, 1 beta' and 1 omega subunit. When a sigma factor is associated with the core the holoenzyme is formed, which can initiate transcription.

It carries out the reaction RNA(n) + a ribonucleoside 5'-triphosphate = RNA(n+1) + diphosphate. Functionally, DNA-dependent RNA polymerase catalyzes the transcription of DNA into RNA using the four ribonucleoside triphosphates as substrates. The polypeptide is DNA-directed RNA polymerase subunit alpha (Baumannia cicadellinicola subsp. Homalodisca coagulata).